Here is a 332-residue protein sequence, read N- to C-terminus: Abscisic acid-inducible protein kinase (332 aa).

ATP-binding positions include 1-8 (GSGNFGVA) and lysine 23. A Protein kinase domain is found at 1 to 250 (GSGNFGVAKL…IPEIKNHPWF (250 aa)). The active-site Proton acceptor is the aspartate 113.

It belongs to the protein kinase superfamily. Ser/Thr protein kinase family. Autophosphorylated.

The catalysed reaction is L-seryl-[protein] + ATP = O-phospho-L-seryl-[protein] + ADP + H(+). It catalyses the reaction L-threonyl-[protein] + ATP = O-phospho-L-threonyl-[protein] + ADP + H(+). Its function is as follows. Involved in water-stress responses. This chain is Abscisic acid-inducible protein kinase, found in Triticum aestivum (Wheat).